Here is a 189-residue protein sequence, read N- to C-terminus: dCTP deaminase (189 aa).

Residues Lys-112–Arg-117, Thr-136–Glu-138, Gln-157, Tyr-171, and Gln-181 each bind dCTP. Residue Glu-138 is the Proton donor/acceptor of the active site.

Belongs to the dCTP deaminase family. Homotrimer.

The enzyme catalyses dCTP + H2O + H(+) = dUTP + NH4(+). The protein operates within pyrimidine metabolism; dUMP biosynthesis; dUMP from dCTP (dUTP route): step 1/2. Functionally, catalyzes the deamination of dCTP to dUTP. In Teredinibacter turnerae (strain ATCC 39867 / T7901), this protein is dCTP deaminase.